A 230-amino-acid polypeptide reads, in one-letter code: RNA chaperone ProQ (230 aa).

The interval 106–181 (AKARVQAQRA…EERHTPVSDI (76 aa)) is disordered. A compositionally biased stretch (basic and acidic residues) spans 146–155 (RRKDNAERKP). Low complexity predominate over residues 158-167 (AKPAAAAKPS).

Belongs to the ProQ family.

It localises to the cytoplasm. In terms of biological role, RNA chaperone with significant RNA binding, RNA strand exchange and RNA duplexing activities. May regulate ProP activity through an RNA-based, post-transcriptional mechanism. This is RNA chaperone ProQ from Cronobacter sakazakii (strain ATCC BAA-894) (Enterobacter sakazakii).